Here is a 628-residue protein sequence, read N- to C-terminus: UvrABC system protein C (628 aa).

The 80-residue stretch at 21–100 (TGPGIYQFKN…IKELKPRYNV (80 aa)) folds into the GIY-YIG domain. In terms of domain architecture, UVR spans 214–249 (AGLLKELHEKMLTAAAELRFEEAAELKMQLQSLRRY).

This sequence belongs to the UvrC family. As to quaternary structure, interacts with UvrB in an incision complex.

The protein resides in the cytoplasm. In terms of biological role, the UvrABC repair system catalyzes the recognition and processing of DNA lesions. UvrC both incises the 5' and 3' sides of the lesion. The N-terminal half is responsible for the 3' incision and the C-terminal half is responsible for the 5' incision. The protein is UvrABC system protein C of Chlorobium luteolum (strain DSM 273 / BCRC 81028 / 2530) (Pelodictyon luteolum).